The sequence spans 286 residues: MSELNESTTSKFVTINEKGLSNFRIHLNDAGEGEAVIMLHGGGPGAGGWSNYYRNIGPFVKAGYRVILQDAPGFNKSDTVVMDEQRGLVNARSVKGMMDVLGIEKAHLVGNSMGGAGALNFALEYPERTGKLILMGPGGLGNSLFTAMPMEGIKLLFKLYAEPSLDTLKQMLNVFLFDQSLITDELVQGRWANIQRNPEHLKNFLLSSQKLPLSSWNVSPRMGEIKAKTLVTWGRDDRFVPLDHGLKLVANMPDAQLHVFPRCGHWAQWEHADAFNRLTLDFLANG.

The 236-residue stretch at Val-36 to His-271 folds into the AB hydrolase-1 domain. Catalysis depends on His-265, which acts as the Proton acceptor.

It belongs to the AB hydrolase superfamily. BphD family. In terms of assembly, homodimer.

It carries out the reaction (2Z,4E)-2-hydroxy-6-oxonona-2,4-dienedioate + H2O = (2Z)-2-hydroxypenta-2,4-dienoate + succinate + H(+). It catalyses the reaction (2Z,4E,7E)-2-hydroxy-6-oxonona-2,4,7-trienedioate + H2O = (2Z)-2-hydroxypenta-2,4-dienoate + fumarate + H(+). It functions in the pathway aromatic compound metabolism; 3-phenylpropanoate degradation. Functionally, catalyzes the cleavage of the C5-C6 bond of 2-hydroxy-6-oxononadienedioate, and probably also 2-hydroxy-6-oxononatrienedioate, a dienol ring fission product of the bacterial meta-cleavage pathway for degradation of phenylpropionic acid. This is 2-hydroxy-6-oxononadienedioate/2-hydroxy-6-oxononatrienedioate hydrolase (mhpC) from Comamonas testosteroni (Pseudomonas testosteroni).